Reading from the N-terminus, the 536-residue chain is Austinoid biosynthesis cluster protein W (536 aa).

The first 19 residues, 1 to 19 (MKHPTVALLGVGMLGCAAA), serve as a signal peptide directing secretion. Disordered regions lie at residues 141-164 (GSAP…PGFP), 185-220 (SLPG…PGFS), 261-302 (FGVP…ASNG), 385-423 (PGSA…ASNG), and 491-536 (PSPT…SSAE). Over residues 195-208 (SGPSQAAAAPSTGD) the composition is skewed to low complexity. Positions 209–220 (SGSGLPGSPGFS) are enriched in gly residues. Composition is skewed to low complexity over residues 287–302 (AGNA…ASNG) and 408–423 (AGNA…ASNG).

Its pathway is secondary metabolite biosynthesis; terpenoid biosynthesis. Part of the gene cluster that mediates the biosynthesis of calidodehydroaustin, a fungal meroterpenoid. The first step of the pathway is the synthesis of 3,5-dimethylorsellinic acid by the polyketide synthase ausA. 3,5-dimethylorsellinic acid is then prenylated by the polyprenyl transferase ausN. Further epoxidation by the FAD-dependent monooxygenase ausM and cyclization by the probable terpene cyclase ausL lead to the formation of protoaustinoid A. Protoaustinoid A is then oxidized to spiro-lactone preaustinoid A3 by the combined action of the FAD-binding monooxygenases ausB and ausC, and the dioxygenase ausE. Acid-catalyzed keto-rearrangement and ring contraction of the tetraketide portion of preaustinoid A3 by ausJ lead to the formation of preaustinoid A4. The aldo-keto reductase ausK, with the help of ausH, is involved in the next step by transforming preaustinoid A4 into isoaustinone which is in turn hydroxylated by the P450 monooxygenase ausI to form austinolide. The cytochrome P450 monooxygenase ausG modifies austinolide to austinol. Austinol is further acetylated to austin by the O-acetyltransferase ausP, which spontaneously changes to dehydroaustin. The cytochrome P450 monooxygenase ausR then converts dehydroaustin is into 7-dehydrodehydroaustin. The hydroxylation catalyzed by ausR permits the O-acetyltransferase ausQ to add an additional acetyl group to the molecule, leading to the formation of acetoxydehydroaustin. The short chain dehydrogenase ausT catalyzes the reduction of the double bond present between carbon atoms 1 and 2 to convert 7-dehydrodehydroaustin into 1,2-dihydro-7-hydroxydehydroaustin. AusQ catalyzes not only an acetylation reaction but also the addition of the PKS ausV diketide product to 1,2-dihydro-7-hydroxydehydroaustin, forming precalidodehydroaustin. Finally, the iron/alpha-ketoglutarate-dependent dioxygenase converts precalidodehydroaustin into calidodehydroaustin. In Aspergillus calidoustus, this protein is Austinoid biosynthesis cluster protein W.